We begin with the raw amino-acid sequence, 70 residues long: Protein SlyX homolog (70 aa).

This sequence belongs to the SlyX family.

The sequence is that of Protein SlyX homolog from Shewanella sediminis (strain HAW-EB3).